The following is a 410-amino-acid chain: MAIILVRAASPGLSAADSISHQGTLQCSTLLKTKRPAARRWMPCSLLGLHPWEAGRPSPAVYSSLAVNPAGEAVVSSEQKVYDVVLKQAALLKRQLRTPVLDARPQDMDMPRNGLKEAYDRCGEICEEYAKTFYLGTMLMTEERRRAIWAIYVWCRRTDELVDGPNANYITPTALDRWEKRLEDLFTGRPYDMLDAALSDTISRFPIDIQPFRDMIEGMRSDLRKTRYNNFDELYMYCYYVAGTVGLMSVPVMGIATESKATTESVYSAALALGIANQLTNILRDVGEDARRGRIYLPQDELAQAGLSDEDIFKGVVTNRWRNFMKRQIKRARMFFEEAERGVTELSQASRWPVWASLLLYRQILDEIEANDYNNFTKRAYVGKGKKLLALPVAYGKSLLLPCSLRNGQT.

The N-terminal 62 residues, 1–62 (MAIILVRAAS…EAGRPSPAVY (62 aa)), are a transit peptide targeting the chloroplast.

The protein belongs to the phytoene/squalene synthase family. In terms of assembly, monomer. In terms of tissue distribution, expressed in embryos, endosperm and seedling leaves. Expressed in leaves and endosperm.

The protein resides in the plastid. The protein localises to the chloroplast stroma. The enzyme catalyses 2 (2E,6E,10E)-geranylgeranyl diphosphate = 15-cis-phytoene + 2 diphosphate. It participates in carotenoid biosynthesis; phytoene biosynthesis; all-trans-phytoene from geranylgeranyl diphosphate: step 1/1. Catalyzes the conversion of geranylgeranyl diphosphate to phytoene. Mediates the first committed step in carotenoid biosynthesis. In Zea mays (Maize), this protein is Phytoene synthase 1, chloroplastic.